The following is a 427-amino-acid chain: Putative F-box/FBD/LRR-repeat protein At4g13965 (427 aa).

The region spanning 13 to 61 (ADRISQLPEALIIQILSLLPTEVAVTTSVLSKQWQFLWKMLPKLNFDSL) is the F-box domain. LRR repeat units lie at residues 67 to 93 (FKTF…HLIV), 98 to 122 (CNSM…VLEV), 141 to 168 (TLEL…HLHY), 169 to 194 (VDFK…VVHR), 213 to 241 (LTIY…KIVG), and 258 to 284 (SMIV…FLEF). The 51-residue stretch at 346–396 (KWNKPKIVPECLLFHLETFMWKGYEWKRNDETEVAKYILSNTNRLKRATFF) folds into the FBD domain.

The sequence is that of Putative F-box/FBD/LRR-repeat protein At4g13965 from Arabidopsis thaliana (Mouse-ear cress).